Reading from the N-terminus, the 74-residue chain is UPF0248 protein MK0350 (74 aa).

This sequence belongs to the UPF0248 family.

In Methanopyrus kandleri (strain AV19 / DSM 6324 / JCM 9639 / NBRC 100938), this protein is UPF0248 protein MK0350.